Here is a 345-residue protein sequence, read N- to C-terminus: Meiotic recombination protein rec12 (345 aa).

Residues 5–137 (DKKKVVRSWI…LNVEASAKGL (133 aa)) enclose the Topo IIA-type catalytic domain. Tyrosine 98 (O-(5'-phospho-DNA)-tyrosine intermediate) is an active-site residue. Positions 179 and 229 each coordinate Mg(2+).

Belongs to the TOP6A family. Component of the DSB catalytic core (DSBC) complex, composed of at least rec12, rec6 and rec14. The complex interacts with mde2. The cofactor is Mg(2+).

Its subcellular location is the cytoplasm. It is found in the nucleus. It catalyses the reaction ATP-dependent breakage, passage and rejoining of double-stranded DNA.. Its function is as follows. Required for formation of the double-strand breaks (DSBs) that initiate meiotic recombination. Required for crossover recombination and chiasmatic segregation of chromosomes during meiosis I. Also involved in the faithful equational segregation of chromosomes during meiosis II. This is Meiotic recombination protein rec12 from Schizosaccharomyces pombe (strain 972 / ATCC 24843) (Fission yeast).